Reading from the N-terminus, the 517-residue chain is L-amino-acid oxidase (517 aa).

The signal sequence occupies residues 1-18 (MNVFFMFSLLFLAALGSC). C29 and C192 are disulfide-bonded. FAD-binding positions include 62–63 (MA), 82–83 (EA), R90, and 106–109 (GPMR). R109 contributes to the substrate binding site. N-linked (GlcNAc...) asparagine glycosylation is present at N191. V280 is a binding site for FAD. Residues C350 and C431 are joined by a disulfide bond. Y391 contributes to the substrate binding site. Residues E476 and 483–488 (GWLDST) contribute to the FAD site. A substrate-binding site is contributed by 483-484 (GW).

It belongs to the flavin monoamine oxidase family. FIG1 subfamily. As to quaternary structure, homodimer; non-covalently linked. FAD is required as a cofactor. In terms of processing, N-glycosylated. As to expression, expressed by the venom gland.

Its subcellular location is the secreted. It carries out the reaction an L-alpha-amino acid + O2 + H2O = a 2-oxocarboxylate + H2O2 + NH4(+). Functionally, catalyzes an oxidative deamination of predominantly hydrophobic and aromatic L-amino acids, thus producing hydrogen peroxide that may contribute to the diverse toxic effects of this enzyme. Exhibits diverse biological activities, such as hemorrhage, hemolysis, edema, apoptosis of vascular endothelial cells or tumor cell lines, antiparasitic activities, as well as regulation of platelet aggregation. Effects of snake L-amino oxidases on platelets are controversial, since they either induce aggregation or inhibit agonist-induced aggregation. These different effects are probably due to different experimental conditions. This protein has antibacterial activities. This chain is L-amino-acid oxidase, found in Pseudechis australis (Mulga snake).